The primary structure comprises 66 residues: Large ribosomal subunit protein uL29 (66 aa).

The protein belongs to the universal ribosomal protein uL29 family.

The polypeptide is Large ribosomal subunit protein uL29 (Rhizobium rhizogenes (strain K84 / ATCC BAA-868) (Agrobacterium radiobacter)).